Here is a 301-residue protein sequence, read N- to C-terminus: Large ribosomal subunit protein uL18 (301 aa).

It belongs to the universal ribosomal protein uL18 family. As to quaternary structure, component of the large ribosomal subunit (LSU). Mature N.crassa ribosomes consist of a small (40S) and a large (60S) subunit. The 40S small subunit contains 1 molecule of ribosomal RNA (18S rRNA) and at least 32 different proteins. The large 60S subunit contains 3 rRNA molecules (26S, 5.8S and 5S rRNA) and at least 42 different proteins.

It is found in the cytoplasm. Functionally, component of the ribosome, a large ribonucleoprotein complex responsible for the synthesis of proteins in the cell. The small ribosomal subunit (SSU) binds messenger RNAs (mRNAs) and translates the encoded message by selecting cognate aminoacyl-transfer RNA (tRNA) molecules. The large subunit (LSU) contains the ribosomal catalytic site termed the peptidyl transferase center (PTC), which catalyzes the formation of peptide bonds, thereby polymerizing the amino acids delivered by tRNAs into a polypeptide chain. The nascent polypeptides leave the ribosome through a tunnel in the LSU and interact with protein factors that function in enzymatic processing, targeting, and the membrane insertion of nascent chains at the exit of the ribosomal tunnel. The sequence is that of Large ribosomal subunit protein uL18 (rpl-5) from Neurospora crassa (strain ATCC 24698 / 74-OR23-1A / CBS 708.71 / DSM 1257 / FGSC 987).